The following is a 130-amino-acid chain: Large ribosomal subunit protein bL12 (130 aa).

The protein belongs to the bacterial ribosomal protein bL12 family. In terms of assembly, homodimer. Part of the ribosomal stalk of the 50S ribosomal subunit. Forms a multimeric L10(L12)X complex, where L10 forms an elongated spine to which 2 to 4 L12 dimers bind in a sequential fashion. Binds GTP-bound translation factors.

Its function is as follows. Forms part of the ribosomal stalk which helps the ribosome interact with GTP-bound translation factors. Is thus essential for accurate translation. The chain is Large ribosomal subunit protein bL12 from Cutibacterium acnes (strain DSM 16379 / KPA171202) (Propionibacterium acnes).